We begin with the raw amino-acid sequence, 116 residues long: Protein Rev (116 aa).

Phosphoserine; by host CK2 occurs at positions 5 and 8. A homomultimerization region spans residues 18–26 (IIKILYQSN). The disordered stretch occupies residues 24 to 49 (QSNPHPSPEGTRQARRNRRRRWRERQ). The Nuclear localization signal and RNA-binding (RRE) signature appears at 34 to 50 (TRQARRNRRRRWRERQR). The span at 36 to 47 (QARRNRRRRWRE) shows a compositional bias: basic residues. A Nuclear export signal and binding to XPO1 motif is present at residues 73 to 84 (LQLPPLDRLTLD). A phosphoserine; by host mark is found at Ser-92 and Ser-99.

It belongs to the HIV-1 REV protein family. Homomultimer; when bound to the RRE. Multimeric assembly is essential for activity and may involve XPO1. Binds to human KPNB1, XPO1, TNPO1, RANBP5 and IPO7. Interacts with the viral Integrase. Interacts with human KHDRBS1. Interacts with human NAP1; this interaction decreases Rev multimerization and stimulates its activity. Interacts with human DEAD-box helicases DDX3 and DDX24; these interactions may serve for viral RNA export to the cytoplasm and packaging, respectively. Interacts with human PSIP1; this interaction may inhibit HIV-1 DNA integration by promoting dissociation of the Integrase-LEDGF/p75 complex. Post-translationally, asymmetrically arginine dimethylated at one site by host PRMT6. Methylation impairs the RNA-binding activity and export of viral RNA from the nucleus to the cytoplasm. In terms of processing, phosphorylated by protein kinase CK2. Presence of, and maybe binding to the N-terminus of the regulatory beta subunit of CK2 is necessary for CK2-mediated Rev's phosphorylation.

Its subcellular location is the host nucleus. The protein resides in the host nucleolus. It localises to the host cytoplasm. Its function is as follows. Escorts unspliced or incompletely spliced viral pre-mRNAs (late transcripts) out of the nucleus of infected cells. These pre-mRNAs carry a recognition sequence called Rev responsive element (RRE) located in the env gene, that is not present in fully spliced viral mRNAs (early transcripts). This function is essential since most viral proteins are translated from unspliced or partially spliced pre-mRNAs which cannot exit the nucleus by the pathway used by fully processed cellular mRNAs. Rev itself is translated from a fully spliced mRNA that readily exits the nucleus. Rev's nuclear localization signal (NLS) binds directly to KPNB1/Importin beta-1 without previous binding to KPNA1/Importin alpha-1. KPNB1 binds to the GDP bound form of RAN (Ran-GDP) and targets Rev to the nucleus. In the nucleus, the conversion from Ran-GDP to Ran-GTP dissociates Rev from KPNB1 and allows Rev's binding to the RRE in viral pre-mRNAs. Rev multimerization on the RRE via cooperative assembly exposes its nuclear export signal (NES) to the surface. Rev can then form a complex with XPO1/CRM1 and Ran-GTP, leading to nuclear export of the complex. Conversion from Ran-GTP to Ran-GDP mediates dissociation of the Rev/RRE/XPO1/RAN complex, so that Rev can return to the nucleus for a subsequent round of export. Beside KPNB1, also seems to interact with TNPO1/Transportin-1, RANBP5/IPO5 and IPO7/RANBP7 for nuclear import. The nucleoporin-like HRB/RIP is an essential cofactor that probably indirectly interacts with Rev to release HIV RNAs from the perinuclear region to the cytoplasm. The protein is Protein Rev of Human immunodeficiency virus type 1 group M subtype B (isolate SF33) (HIV-1).